The primary structure comprises 699 residues: Probable xyloglucan glycosyltransferase 12 (699 aa).

Transmembrane regions (helical) follow at residues 126–146 (CLKV…AAYF) and 194–214 (IVLF…CFWI). Aspartate 280 is an active-site residue. 2 residues coordinate substrate: aspartate 339 and aspartate 341. The active site involves aspartate 433. A run of 2 helical transmembrane segments spans residues 511-531 (LILP…TMFV) and 536-556 (LPAW…ILPA). The disordered stretch occupies residues 616–646 (EKTTKHQRGVSAPETEAEKKAEKTKRKKKKH). Residues lysine 617 and lysine 620 each participate in a glycyl lysine isopeptide (Lys-Gly) (interchain with G-Cter in ubiquitin) cross-link. Serine 626 is subject to Phosphoserine. The segment covering 637 to 646 (EKTKRKKKKH) has biased composition (basic residues). Transmembrane regions (helical) follow at residues 649-668 (IYMK…TRSL) and 674-694 (IHFY…LDLI).

Belongs to the glycosyltransferase 2 family. Plant cellulose synthase-like C subfamily. In terms of assembly, homodimer. Mainly expressed in roots, flowers and seeds, and, at very low levels, in seedlings, leaves and stems.

The protein localises to the golgi apparatus membrane. Its function is as follows. Probable beta-1,4-glucan synthase rather involved in the synthesis of the xyloglucan backbone than cellulose. Seems to work simultaneously with xyloglucan 6-xylosyltransferase. Xyloglucan is a noncellulosic polysaccharides of plant cell wall and consists of a glucan backbone substituted by xylose, galactose and fucose. This is Probable xyloglucan glycosyltransferase 12 from Arabidopsis thaliana (Mouse-ear cress).